Reading from the N-terminus, the 254-residue chain is 4-hydroxy-tetrahydrodipicolinate reductase (254 aa).

7–12 (GASGRI) contacts NAD(+). Arg-35 serves as a coordination point for NADP(+). NAD(+) is bound by residues 91-93 (GTT) and 115-118 (AHNM). The active-site Proton donor/acceptor is His-147. His-148 contributes to the (S)-2,3,4,5-tetrahydrodipicolinate binding site. The Proton donor role is filled by Lys-151. 157 to 158 (GT) serves as a coordination point for (S)-2,3,4,5-tetrahydrodipicolinate.

The protein belongs to the DapB family.

It is found in the cytoplasm. It carries out the reaction (S)-2,3,4,5-tetrahydrodipicolinate + NAD(+) + H2O = (2S,4S)-4-hydroxy-2,3,4,5-tetrahydrodipicolinate + NADH + H(+). The catalysed reaction is (S)-2,3,4,5-tetrahydrodipicolinate + NADP(+) + H2O = (2S,4S)-4-hydroxy-2,3,4,5-tetrahydrodipicolinate + NADPH + H(+). It participates in amino-acid biosynthesis; L-lysine biosynthesis via DAP pathway; (S)-tetrahydrodipicolinate from L-aspartate: step 4/4. Its function is as follows. Catalyzes the conversion of 4-hydroxy-tetrahydrodipicolinate (HTPA) to tetrahydrodipicolinate. This chain is 4-hydroxy-tetrahydrodipicolinate reductase, found in Helicobacter pylori (strain P12).